Here is a 533-residue protein sequence, read N- to C-terminus: Protein mono-ADP-ribosyltransferase PARP3 (533 aa).

Positions 1 to 30 (MAPKRKASVQTEGSKKRRQGTEEEDSFRST) are disordered. N6-(ADP-ribosyl)lysine is present on lysine 6. Glutamate 12 carries the post-translational modification ADP-ribosyl glutamic acid. The short motif at 14-18 (SKKRR) is the Nuclear localization signal element. An ADP-ribosyl glutamic acid mark is found at glutamate 24 and glutamate 32. The region spanning 57–147 (GIQVHEDYDC…DRFVAQPNKY (91 aa)) is the WGR domain. Aspartate 138 is modified (ADP-ribosyl aspartic acid). Residues glutamate 160, glutamate 230, glutamate 309, and glutamate 310 each carry the ADP-ribosyl glutamic acid modification. Residues 181-299 (PCSLDPATQN…DIELAQTLQA (119 aa)) enclose the PARP alpha-helical domain. The PARP catalytic domain maps to 313–533 (HPLDRDYQLL…RLRYLLEIHL (221 aa)).

It belongs to the ARTD/PARP family. As to quaternary structure, interacts with PARP1; leading to activate PARP1 in absence of DNA. Interacts with PRKDC. Interacts with XRCC5/Ku80; the interaction is dependent on nucleic acids. Interacts with XRCC6/Ku70; the interaction is dependent on nucleic acids. Interacts with EZH2, HDAC1, HDAC2, SUZ12, YY1, LRIG3 and LIG4. In terms of processing, auto-ADP-ribosylated.

It localises to the nucleus. The protein localises to the chromosome. The protein resides in the cytoplasm. Its subcellular location is the cytoskeleton. It is found in the microtubule organizing center. It localises to the centrosome. The protein localises to the centriole. It carries out the reaction L-aspartyl-[protein] + NAD(+) = 4-O-(ADP-D-ribosyl)-L-aspartyl-[protein] + nicotinamide. It catalyses the reaction L-glutamyl-[protein] + NAD(+) = 5-O-(ADP-D-ribosyl)-L-glutamyl-[protein] + nicotinamide. The enzyme catalyses L-lysyl-[protein] + NAD(+) = N(6)-(ADP-D-ribosyl)-L-lysyl-[protein] + nicotinamide + H(+). Functionally, mono-ADP-ribosyltransferase that mediates mono-ADP-ribosylation of target proteins and plays a key role in the response to DNA damage. Mediates mono-ADP-ribosylation of glutamate, aspartate or lysine residues on target proteins. In contrast to PARP1 and PARP2, it is not able to mediate poly-ADP-ribosylation. Involved in DNA repair by mediating mono-ADP-ribosylation of a limited number of acceptor proteins involved in chromatin architecture and in DNA metabolism, such as histone H2B, XRCC5 and XRCC6. ADP-ribosylation follows DNA damage and appears as an obligatory step in a detection/signaling pathway leading to the reparation of DNA strand breaks. Involved in single-strand break repair by catalyzing mono-ADP-ribosylation of histone H2B on 'Glu-2' (H2BE2ADPr) of nucleosomes containing nicked DNA. Cooperates with the XRCC5-XRCC6 (Ku80-Ku70) heterodimer to limit end-resection thereby promoting accurate NHEJ. Suppresses G-quadruplex (G4) structures in response to DNA damage. Associates with a number of DNA repair factors and is involved in the response to exogenous and endogenous DNA strand breaks. Together with APLF, promotes the retention of the LIG4-XRCC4 complex on chromatin and accelerate DNA ligation during non-homologous end-joining (NHEJ). May link the DNA damage surveillance network to the mitotic fidelity checkpoint. Acts as a negative regulator of immunoglobulin class switch recombination, probably by controlling the level of AICDA /AID on the chromatin. In addition to proteins, also able to ADP-ribosylate DNA: mediates DNA mono-ADP-ribosylation of DNA strand break termini via covalent addition of a single ADP-ribose moiety to a 5'- or 3'-terminal phosphate residues in DNA containing multiple strand breaks. This is Protein mono-ADP-ribosyltransferase PARP3 from Mus musculus (Mouse).